Reading from the N-terminus, the 1187-residue chain is DNA excision repair protein CSB (1187 aa).

The segment covering 31-43 (QATTDPADSSGPT) has biased composition (polar residues). Disordered stretches follow at residues 31-53 (QATT…PDDA), 75-102 (IKGA…HHGA), 217-242 (KRVE…MEAS), and 265-351 (DSES…EGSD). Basic and acidic residues-rich tracts occupy residues 92–101 (KGKDQPDHHG) and 217–230 (KRVE…RQDD). Over residues 300 to 319 (KRPRNKTKRPLPGKKWRKAN) the composition is skewed to basic residues. Acidic residues predominate over residues 339 to 351 (SDDDEDQVTEGSD). Positions 384 to 580 (WELHCQRAGG…WSLFDFVFPG (197 aa)) constitute a Helicase ATP-binding domain. Residue 397–404 (DEMGLGKT) coordinates ATP. The disordered stretch occupies residues 457 to 480 (SSSKKSKRSSDSDSEASWDSDQEE). Positions 468-480 (SDSEASWDSDQEE) are enriched in acidic residues. Positions 531 to 534 (DEGH) match the DEGH box motif. The Helicase C-terminal domain maps to 716 to 876 (KVVEQVLKVW…RRFFKARDMK (161 aa)). Disordered regions lie at residues 916-945 (LYAA…HCPD) and 1095-1116 (GSAS…SSTR). The span at 918-933 (AASATPTTSGTEPSSS) shows a compositional bias: low complexity.

The protein belongs to the SNF2/RAD54 helicase family. Homodimer. Binds DNA. In terms of tissue distribution, expressed in proliferating tissues. Highly expressed in shoot apical meristem (SAM). Expressed in roots, young leaves, flag leaves, and panicles. Expressed at very low levels in mature leaves.

It is found in the nucleus. Functionally, essential factor involved in transcription-coupled nucleotide excision repair (TCR) which allows RNA polymerase II-blocking lesions to be rapidly removed from the transcribed strand of active genes. Upon DNA-binding, it locally modifies DNA conformation by wrapping the DNA around itself, thereby modifying the interface between stalled RNA polymerase II and DNA. It is required for transcription-coupled repair complex formation. In Oryza sativa subsp. japonica (Rice), this protein is DNA excision repair protein CSB.